The primary structure comprises 207 residues: Ribonuclease HII (207 aa).

Residues 18–207 (GLVAGVDEAG…VAEVLREALP (190 aa)) form the RNase H type-2 domain. Positions 24, 25, and 116 each coordinate a divalent metal cation.

It belongs to the RNase HII family. Mn(2+) serves as cofactor. Requires Mg(2+) as cofactor.

It localises to the cytoplasm. It catalyses the reaction Endonucleolytic cleavage to 5'-phosphomonoester.. Endonuclease that specifically degrades the RNA of RNA-DNA hybrids. The chain is Ribonuclease HII from Albidiferax ferrireducens (strain ATCC BAA-621 / DSM 15236 / T118) (Rhodoferax ferrireducens).